The primary structure comprises 284 residues: D-tagatose-1,6-bisphosphate aldolase subunit GatY (284 aa).

D82 (proton donor) is an active-site residue. Positions 83 and 180 each coordinate Zn(2+). Residue G181 coordinates dihydroxyacetone phosphate. H208 contacts Zn(2+). Residues 209–211 and 230–233 each bind dihydroxyacetone phosphate; these read GAS and NVAT.

Belongs to the class II fructose-bisphosphate aldolase family. TagBP aldolase GatY subfamily. In terms of assembly, forms a complex with GatZ. Zn(2+) serves as cofactor.

The catalysed reaction is D-tagatofuranose 1,6-bisphosphate = D-glyceraldehyde 3-phosphate + dihydroxyacetone phosphate. It participates in carbohydrate metabolism; D-tagatose 6-phosphate degradation; D-glyceraldehyde 3-phosphate and glycerone phosphate from D-tagatose 6-phosphate: step 2/2. Its function is as follows. Catalytic subunit of the tagatose-1,6-bisphosphate aldolase GatYZ, which catalyzes the reversible aldol condensation of dihydroxyacetone phosphate (DHAP or glycerone-phosphate) with glyceraldehyde 3-phosphate (G3P) to produce tagatose 1,6-bisphosphate (TBP). Requires GatZ subunit for full activity and stability. Is involved in the catabolism of galactitol. This Escherichia coli O7:K1 (strain IAI39 / ExPEC) protein is D-tagatose-1,6-bisphosphate aldolase subunit GatY.